We begin with the raw amino-acid sequence, 523 residues long: Synaptotagmin-10 (523 aa).

Residues 1 to 55 lie on the Vesicular side of the membrane; sequence MSFRKEDGVSSLCQKALHIITELCFAGQVEWDKCSGIFPADRSGQGGGGTDISVS. The tract at residues 13–35 is cysteine motif; sequence CQKALHIITELCFAGQVEWDKCS. The helical transmembrane segment at 56 to 76 threads the bilayer; sequence LLAVVVSFCGLALLVVSLFVF. At 77-523 the chain is on the cytoplasmic side; the sequence is WKLCWPCWKS…CSSPRPPSTP (447 aa). Residue Thr136 is modified to Phosphothreonine. C2 domains are found at residues 231 to 352 and 363 to 496; these read TCGK…TVWK and DLGE…THWH. Asp262, Asp268, Asp320, Phe321, Asp322, Ser325, Asp328, Asp394, Asp400, Asp454, and Asp456 together coordinate Ca(2+).

The protein belongs to the synaptotagmin family. As to quaternary structure, homodimer; disulfide-linked via the cysteine motif. Can also form heterodimers with SYT3, SYT6, SYT7 and SYT9. Ca(2+) is required as a cofactor. Highly expressed in the olfactory bulb.

Its subcellular location is the cytoplasmic vesicle. It is found in the secretory vesicle membrane. Its function is as follows. Ca(2+) sensor specifically required for the Ca(2+)-dependent exocytosis of secretory vesicles containing IGF1 in neurons of the olfactory bulb. Exocytosis of IGF1 is required for sensory perception of smell. Not involved in Ca(2+)-dependent synaptic vesicle exocytosis. Acts through Ca(2+) and phospholipid binding to the C2 domain: Ca(2+) induces binding of the C2-domains to phospholipid membranes and to assembled SNARE-complexes; both actions contribute to triggering exocytosis. The chain is Synaptotagmin-10 from Mus musculus (Mouse).